A 136-amino-acid chain; its full sequence is Small ribosomal subunit protein eS19 (136 aa).

Lys23 carries the post-translational modification N6-acetyllysine. The residue at position 67 (Arg67) is an Omega-N-methylarginine. An N6-acetyllysine mark is found at Lys111 and Lys115. The disordered stretch occupies residues 116–136 (DQDGGRKLTPQGQRDLDRIAG).

Belongs to the eukaryotic ribosomal protein eS19 family. As to quaternary structure, component of the small ribosomal subunit. Part of the small subunit (SSU) processome, composed of more than 70 proteins and the RNA chaperone small nucleolar RNA (snoRNA) U3. Interacts with RPS19BP1; the interaction is direct and mediates the integration of RPS19 in state post-A1. Interacts with RPS19BP1.

It is found in the cytoplasm. It localises to the nucleus. The protein localises to the nucleolus. Its function is as follows. Component of the small ribosomal subunit. The ribosome is a large ribonucleoprotein complex responsible for the synthesis of proteins in the cell. Required for pre-rRNA processing and maturation of 40S ribosomal subunits. Part of the small subunit (SSU) processome, first precursor of the small eukaryotic ribosomal subunit. During the assembly of the SSU processome in the nucleolus, many ribosome biogenesis factors, an RNA chaperone and ribosomal proteins associate with the nascent pre-rRNA and work in concert to generate RNA folding, modifications, rearrangements and cleavage as well as targeted degradation of pre-ribosomal RNA by the RNA exosome. The chain is Small ribosomal subunit protein eS19 (RPS19) from Sus scrofa (Pig).